The primary structure comprises 309 residues: Aspartate carbamoyltransferase catalytic subunit (309 aa).

Positions 57 and 58 each coordinate carbamoyl phosphate. L-aspartate is bound at residue lysine 86. 3 residues coordinate carbamoyl phosphate: arginine 107, histidine 135, and glutamine 138. 2 residues coordinate L-aspartate: arginine 168 and arginine 228. Residues leucine 267 and proline 268 each coordinate carbamoyl phosphate.

Belongs to the aspartate/ornithine carbamoyltransferase superfamily. ATCase family. In terms of assembly, heterooligomer of catalytic and regulatory chains.

It carries out the reaction carbamoyl phosphate + L-aspartate = N-carbamoyl-L-aspartate + phosphate + H(+). It participates in pyrimidine metabolism; UMP biosynthesis via de novo pathway; (S)-dihydroorotate from bicarbonate: step 2/3. In terms of biological role, catalyzes the condensation of carbamoyl phosphate and aspartate to form carbamoyl aspartate and inorganic phosphate, the committed step in the de novo pyrimidine nucleotide biosynthesis pathway. The polypeptide is Aspartate carbamoyltransferase catalytic subunit (Cenarchaeum symbiosum (strain A)).